We begin with the raw amino-acid sequence, 509 residues long: Ribonuclease Y (509 aa).

Residues 3-23 (IIFSSIFAGFILGFLIRVFLG) traverse the membrane as a helical segment. A KH domain is found at 197 to 257 (TVASVELPND…IRKELAKRTL (61 aa)). The HD domain maps to 323 to 418 (VLSHSKETAI…VQIADAISAS (96 aa)).

It belongs to the RNase Y family.

It localises to the cell membrane. Endoribonuclease that initiates mRNA decay. This Borreliella afzelii (strain PKo) (Borrelia afzelii) protein is Ribonuclease Y.